We begin with the raw amino-acid sequence, 93 residues long: Chaperone NapD (93 aa).

It belongs to the NapD family. As to quaternary structure, interacts with the cytoplasmic NapA precursor.

The protein resides in the cytoplasm. Functionally, chaperone for NapA, the catalytic subunit of the periplasmic nitrate reductase. It binds directly and specifically to the twin-arginine signal peptide of NapA, preventing premature interaction with the Tat translocase and premature export. This chain is Chaperone NapD, found in Haemophilus influenzae (strain ATCC 51907 / DSM 11121 / KW20 / Rd).